A 327-amino-acid polypeptide reads, in one-letter code: Ribosomal RNA small subunit methyltransferase H (327 aa).

S-adenosyl-L-methionine contacts are provided by residues 36 to 38 (GGH), D61, F88, D114, and Q121.

Belongs to the methyltransferase superfamily. RsmH family.

The protein resides in the cytoplasm. It catalyses the reaction cytidine(1402) in 16S rRNA + S-adenosyl-L-methionine = N(4)-methylcytidine(1402) in 16S rRNA + S-adenosyl-L-homocysteine + H(+). In terms of biological role, specifically methylates the N4 position of cytidine in position 1402 (C1402) of 16S rRNA. The chain is Ribosomal RNA small subunit methyltransferase H from Chlorobium phaeovibrioides (strain DSM 265 / 1930) (Prosthecochloris vibrioformis (strain DSM 265)).